Consider the following 610-residue polypeptide: Zinc metalloproteinase-disintegrin-like 3a (610 aa).

Positions 1–19 (MIQVLLVTILAVFPYQGSS) are cleaved as a signal peptide. Residues 20 to 188 (IILGSGNVND…KKASQLVVTA (169 aa)) constitute a propeptide that is removed on maturation. The Peptidase M12B domain maps to 198–394 (RYVELVIVAD…YTPKCILNEP (197 aa)). Glu201 is a binding site for Ca(2+). Asn217 carries N-linked (GlcNAc...) asparagine glycosylation. Asp285 provides a ligand contact to Ca(2+). 3 cysteine pairs are disulfide-bonded: Cys309/Cys389, Cys349/Cys373, and Cys351/Cys356. A Zn(2+)-binding site is contributed by His334. Glu335 is an active-site residue. Residues His338 and His344 each contribute to the Zn(2+) site. 7 residues coordinate Ca(2+): Cys389, Asn392, Val404, Asn407, Glu411, Glu414, and Asp417. One can recognise a Disintegrin domain in the interval 402–488 (PPVCGNELLE…DCPTDDFHKN (87 aa)). Cystine bridges form between Cys405–Cys434, Cys416–Cys429, Cys418–Cys424, Cys428–Cys451, Cys442–Cys448, Cys447–Cys473, Cys460–Cys480, Cys467–Cys499, Cys492–Cys504, Cys511–Cys561, Cys526–Cys572, Cys539–Cys549, Cys556–Cys598, and Cys592–Cys603. Positions 466–468 (ECD) match the D/ECD-tripeptide motif.

This sequence belongs to the venom metalloproteinase (M12B) family. P-III subfamily. The cofactor is Zn(2+). In terms of tissue distribution, expressed by the venom gland.

Its subcellular location is the secreted. Snake venom metalloproteinase that impairs hemostasis in the envenomed animal. The protein is Zinc metalloproteinase-disintegrin-like 3a of Crotalus adamanteus (Eastern diamondback rattlesnake).